A 785-amino-acid polypeptide reads, in one-letter code: Endonuclease MutS2 (785 aa).

332-339 (GPNTGGKT) is an ATP binding site. Residues 710–785 (IDLRGLDAEE…GDGATIVELK (76 aa)) form the Smr domain.

This sequence belongs to the DNA mismatch repair MutS family. MutS2 subfamily. In terms of assembly, homodimer. Binds to stalled ribosomes, contacting rRNA.

Functionally, endonuclease that is involved in the suppression of homologous recombination and thus may have a key role in the control of bacterial genetic diversity. Its function is as follows. Acts as a ribosome collision sensor, splitting the ribosome into its 2 subunits. Detects stalled/collided 70S ribosomes which it binds and splits by an ATP-hydrolysis driven conformational change. Acts upstream of the ribosome quality control system (RQC), a ribosome-associated complex that mediates the extraction of incompletely synthesized nascent chains from stalled ribosomes and their subsequent degradation. Probably generates substrates for RQC. In Clostridium botulinum (strain Eklund 17B / Type B), this protein is Endonuclease MutS2.